The following is a 462-amino-acid chain: Nitrate/nitrite transporter NarU (462 aa).

Topologically, residues 1 to 35 (MALQNEKNSRYLLRDWKPENPAFWENKGKHIARRN) are cytoplasmic. A helical transmembrane segment spans residues 36-56 (LWISVSCLLLAFCVWMLFSAV). Over 57-76 (TVNLNKIGFNFTTDQLFLLT) the chain is Periplasmic. The chain crosses the membrane as a helical span at residues 77-97 (ALPSVSGALLRVPYSFMVPIF). Residues 98-101 (GGRR) are Cytoplasmic-facing. A helical transmembrane segment spans residues 102–122 (WTVFSTAILIIPCVWLGIAVQ). The Periplasmic segment spans residues 123–125 (NPN). A helical transmembrane segment spans residues 126 to 146 (TPFGIFIVIALLCGFAGANFA). At 147 to 180 (SSMGNISFFFPKAKQGSALGINGGLGNLGVSVMQ) the chain is on the cytoplasmic side. Residues 181–201 (LVAPLVIFVPVFAFLGVNGVP) traverse the membrane as a helical segment. Over 202–206 (QADGS) the chain is Periplasmic. Residues 207 to 227 (VMSLANAAWIWVPLLAIATIA) form a helical membrane-spanning segment. The Cytoplasmic segment spans residues 228 to 258 (AWSGMNDIASSRASIADQLPVLQRLHLWLLS). A helical membrane pass occupies residues 259–279 (LLYLATFGSFIGFSAGFAMLA). Residues 280 to 287 (KTQFPDVN) are Periplasmic-facing. Residues 288-308 (ILRLAFFGPFIGAIARSVGGA) traverse the membrane as a helical segment. Residues 309 to 317 (ISDKFGGVR) are Cytoplasmic-facing. A helical transmembrane segment spans residues 318 to 338 (VTLINFIFMAIFSALLFLTLP). Residues 339 to 344 (GTGSGN) lie on the Periplasmic side of the membrane. A helical membrane pass occupies residues 345 to 365 (FIAFYAVFMGLFLTAGLGSGS). The Cytoplasmic segment spans residues 366–401 (TFQMIAVIFRQITIYRVKMKGGSDEQAHKEAVTETA). The helical transmembrane segment at 402–422 (AALGFISAIGAVGGFFIPQAF) threads the bilayer. Residues 423-432 (GMSLNMTGSP) lie on the Periplasmic side of the membrane. Residues 433–453 (VGAMKVFLIFYIVCVLLTWLV) traverse the membrane as a helical segment. Over 454 to 462 (YGRRKFSQK) the chain is Cytoplasmic.

It belongs to the major facilitator superfamily. Nitrate/nitrite porter (TC 2.A.1.8) family.

It localises to the cell inner membrane. In terms of biological role, catalyzes nitrate uptake, nitrite uptake and nitrite export across the cytoplasmic membrane. May function as a nitrate/H(+) and nitrite/H(+) channel. Could confer a selective advantage during severe nutrient starvation or slow growth. The chain is Nitrate/nitrite transporter NarU (narU) from Escherichia coli (strain K12).